Here is a 48-residue protein sequence, read N- to C-terminus: DNA-directed RNA polymerase subunit Rpo12 (48 aa).

Residues Cys-9, Cys-26, and Cys-29 each contribute to the Zn(2+) site.

This sequence belongs to the archaeal Rpo12/eukaryotic RPC10 RNA polymerase subunit family. In terms of assembly, part of the RNA polymerase complex. Requires Zn(2+) as cofactor.

The protein resides in the cytoplasm. The enzyme catalyses RNA(n) + a ribonucleoside 5'-triphosphate = RNA(n+1) + diphosphate. In terms of biological role, DNA-dependent RNA polymerase (RNAP) catalyzes the transcription of DNA into RNA using the four ribonucleoside triphosphates as substrates. In Saccharolobus islandicus (strain Y.N.15.51 / Yellowstone #2) (Sulfolobus islandicus), this protein is DNA-directed RNA polymerase subunit Rpo12.